A 749-amino-acid chain; its full sequence is Disintegrin and metalloproteinase domain-containing protein 10 (749 aa).

An N-terminal signal peptide occupies residues 1–18; sequence MVLPTVLILLLSWAAGLG. A propeptide spanning residues 19–214 is cleaved from the precursor; that stretch reads GQYGNPLNKY…MGPELLRKKR (196 aa). The Cysteine switch signature appears at 171–178; it reads GGCADHSV. Residue Cys-173 coordinates Zn(2+). At 215 to 673 the chain is on the extracellular side; it reads TTLAERNTCQ…SPQLYENIAE (459 aa). The Peptidase M12B domain occupies 221–457; that stretch reads NTCQLYIQTD…KRNNCFVESG (237 aa). Disulfide bonds link Cys-223–Cys-314, Cys-345–Cys-452, Cys-400–Cys-436, Cys-461–Cys-496, Cys-472–Cys-485, Cys-474–Cys-480, Cys-484–Cys-516, Cys-504–Cys-512, Cys-511–Cys-537, Cys-525–Cys-544, Cys-531–Cys-563, Cys-556–Cys-568, Cys-573–Cys-599, Cys-581–Cys-608, Cys-583–Cys-598, Cys-595–Cys-640, and Cys-633–Cys-646. N-linked (GlcNAc...) asparagine glycans are attached at residues Asn-268 and Asn-279. A Zn(2+)-binding site is contributed by His-384. The active site involves Glu-385. The Zn(2+) site is built by His-388 and His-394. N-linked (GlcNAc...) asparagine glycosylation occurs at Asn-440. The Disintegrin domain occupies 458–552; the sequence is QPICGNGMVE…LCPASDPKPN (95 aa). N-linked (GlcNAc...) asparagine glycosylation occurs at Asn-552. The chain crosses the membrane as a helical span at residues 674-697; it reads WIVAHWWAVLLMGIALIMLMAGFI. At 698 to 749 the chain is on the cytoplasmic side; that stretch reads KICSVHTPSSNPKLPPPKPLPGTLKRRRPPQPIQQPPRQRPRESYQMGHMRR. The tract at residues 705–749 is disordered; that stretch reads PSSNPKLPPPKPLPGTLKRRRPPQPIQQPPRQRPRESYQMGHMRR. Positions 709 to 716 match the SH3-binding motif; it reads PKLPPPKP. Thr-720 carries the post-translational modification Phosphothreonine. An SH3-binding motif is present at residues 723 to 729; that stretch reads RRRPPQP. The segment at 735–749 is interaction with AP2A1, AP2A2 and AP2M1; sequence RQRPRESYQMGHMRR.

As to quaternary structure, forms a ternary EFNA5-EPHA3-ADAM10 complex mediating EFNA5 extracellular domain shedding by ADAM10 which regulates the EFNA5-EPHA3 complex internalization and function, the cleavage occurs in trans, with ADAM10 and its substrate being on the membranes of opposing cells. Interacts with the clathrin adapter AP2 complex subunits AP2A1, AP2A2, AP2B1, and AP2M1; this interaction facilitates ADAM10 endocytosis from the plasma membrane during long-term potentiation in hippocampal neurons. Forms a ternary complex composed of ADAM10, EPHA4 and CADH1; within the complex, ADAM10 cleaves CADH1 which disrupts adherens junctions. Interacts with EPHA2. Interacts with NGF in a divalent cation-dependent manner. Interacts with TSPAN14; the interaction promotes ADAM10 maturation and cell surface expression. Interacts with TSPAN5, TSPAN10, TSPAN14, TSPAN15, TSPAN17 and TSPAN33; these interactions regulate ADAM10 substrate specificity, endocytosis and turnover. Interacts (via extracellular domain) with TSPAN33 (via extracellular domain) and (via cytoplasmic domain) with AFDN; interaction with TSPAN33 allows the docking of ADAM10 to zonula adherens through a PDZ11-dependent interaction between TSPAN33 and PLEKHA7 while interaction with AFDN locks ADAM10 at zonula adherens. Interacts with DLG1; this interaction recruits ADAM10 to the cell membrane during long-term depression in hippocampal neurons. Interacts (via extracellular domain) with BACE1 (via extracellular domain). Interacts with FAM171A1. Requires Zn(2+) as cofactor. The precursor is cleaved by furin and PCSK7. As to expression, expressed in brain, kidney, lung, spleen, ovary and testis.

Its subcellular location is the cell membrane. The protein localises to the golgi apparatus membrane. The protein resides in the cytoplasmic vesicle. It localises to the clathrin-coated vesicle. It is found in the cell projection. Its subcellular location is the axon. The protein localises to the dendrite. The protein resides in the cell junction. It localises to the adherens junction. It is found in the cytoplasm. It carries out the reaction Endopeptidase of broad specificity.. Its activity is regulated as follows. Catalytically inactive when the propeptide is intact and associated with the mature enzyme. The disintegrin and cysteine-rich regions modulate access of substrates to exerts an inhibitory effect on the cleavage of ADAM10 substrates. Transmembrane metalloprotease which mediates the ectodomain shedding of a myriad of transmembrane proteins, including adhesion proteins, growth factor precursors and cytokines being essential for development and tissue homeostasis. Associates with six members of the tetraspanin superfamily TspanC8 which regulate its exit from the endoplasmic reticulum and its substrate selectivity. Cleaves the membrane-bound precursor of TNF-alpha at '76-Ala-|-Val-77' to its mature soluble form. Responsible for the proteolytical release of soluble JAM3 from endothelial cells surface. Responsible for the proteolytic release of several other cell-surface proteins, including heparin-binding epidermal growth-like factor, ephrin-A2, CD44, CDH2 and for constitutive and regulated alpha-secretase cleavage of amyloid precursor protein (APP). Contributes to the normal cleavage of the cellular prion protein. Involved in the cleavage of the adhesion molecule L1 at the cell surface and in released membrane vesicles, suggesting a vesicle-based protease activity. Also controls the proteolytic processing of Notch and mediates lateral inhibition during neurogenesis. Required for the development of type 1 transitional B cells into marginal zone B cells, probably by cleaving Notch. Responsible for the FasL ectodomain shedding and for the generation of the remnant ADAM10-processed FasL (FasL APL) transmembrane form. Also cleaves the ectodomain of the integral membrane proteins CORIN and ITM2B. Mediates the proteolytic cleavage of LAG3, leading to release the secreted form of LAG3. Mediates the proteolytic cleavage of IL6R and IL11RA, leading to the release of secreted forms of IL6R and IL11RA. Enhances the cleavage of CHL1 by BACE1. Cleaves NRCAM. Cleaves TREM2, resulting in shedding of the TREM2 ectodomain. Involved in the development and maturation of glomerular and coronary vasculature. During development of the cochlear organ of Corti, promotes pillar cell separation by forming a ternary complex with CADH1 and EPHA4 and cleaving CADH1 at adherens junctions. May regulate the EFNA5-EPHA3 signaling. Regulates leukocyte transmigration as a sheddase for the adherens junction protein VE-cadherin/CDH5 in endothelial cells. The protein is Disintegrin and metalloproteinase domain-containing protein 10 (Adam10) of Rattus norvegicus (Rat).